A 624-amino-acid polypeptide reads, in one-letter code: DNA-directed RNA polymerase subunit gamma (624 aa).

4 residues coordinate Zn(2+): C70, C72, C85, and C88. D466, D468, and D470 together coordinate Mg(2+).

The protein belongs to the RNA polymerase beta' chain family. RpoC1 subfamily. In cyanobacteria the RNAP catalytic core is composed of 2 alpha, 1 beta, 1 beta', 1 gamma and 1 omega subunit. When a sigma factor is associated with the core the holoenzyme is formed, which can initiate transcription. The cofactor is Mg(2+). Zn(2+) is required as a cofactor.

It carries out the reaction RNA(n) + a ribonucleoside 5'-triphosphate = RNA(n+1) + diphosphate. In terms of biological role, DNA-dependent RNA polymerase catalyzes the transcription of DNA into RNA using the four ribonucleoside triphosphates as substrates. The sequence is that of DNA-directed RNA polymerase subunit gamma from Synechococcus sp. (strain ATCC 27144 / PCC 6301 / SAUG 1402/1) (Anacystis nidulans).